Consider the following 166-residue polypeptide: Interferon gamma (166 aa).

Positions 1–23 (MKYTSYFLALLLCGLLGFSGSYG) are cleaved as a signal peptide. At Q24 the chain carries Pyrrolidone carboxylic acid. N-linked (GlcNAc...) asparagine glycans are attached at residues N39 and N106.

The protein belongs to the type II (or gamma) interferon family. As to quaternary structure, homodimer. Interacts with IFNGR1 (via extracellular domain); this interaction promotes IFNGR1 dimerization. As to expression, released primarily from activated T lymphocytes.

The protein resides in the secreted. Type II interferon produced by immune cells such as T-cells and NK cells that plays crucial roles in antimicrobial, antiviral, and antitumor responses by activating effector immune cells and enhancing antigen presentation. Primarily signals through the JAK-STAT pathway after interaction with its receptor IFNGR1 to affect gene regulation. Upon IFNG binding, IFNGR1 intracellular domain opens out to allow association of downstream signaling components JAK2, JAK1 and STAT1, leading to STAT1 activation, nuclear translocation and transcription of IFNG-regulated genes. Many of the induced genes are transcription factors such as IRF1 that are able to further drive regulation of a next wave of transcription. Plays a role in class I antigen presentation pathway by inducing a replacement of catalytic proteasome subunits with immunoproteasome subunits. In turn, increases the quantity, quality, and repertoire of peptides for class I MHC loading. Increases the efficiency of peptide generation also by inducing the expression of activator PA28 that associates with the proteasome and alters its proteolytic cleavage preference. Up-regulates as well MHC II complexes on the cell surface by promoting expression of several key molecules such as cathepsins B/CTSB, H/CTSH, and L/CTSL. Participates in the regulation of hematopoietic stem cells during development and under homeostatic conditions by affecting their development, quiescence, and differentiation. This chain is Interferon gamma (IFNG), found in Bos taurus (Bovine).